The chain runs to 646 residues: ATP-dependent zinc metalloprotease FtsH (646 aa).

Residues 1–27 form a disordered region; it reads MTNNQTDRPRPPGPESRRFDNNDKNNR. At 1-35 the chain is on the cytoplasmic side; that stretch reads MTNNQTDRPRPPGPESRRFDNNDKNNRNRWGPIPS. The span at 7–26 shows a compositional bias: basic and acidic residues; that stretch reads DRPRPPGPESRRFDNNDKNN. Residues 36-56 form a helical membrane-spanning segment; it reads WAWIVLIVALLLNWLVAPILF. Topologically, residues 57–144 are extracellular; it reads PEGKGAVSIP…QPESSTRSLL (88 aa). Residues 145 to 165 form a helical membrane-spanning segment; sequence LSILISFGPTILFFLLFLWLI. At 166–646 the chain is on the cytoplasmic side; it reads SKAQSSQQGL…GLGEKQPEPA (481 aa). 237–244 provides a ligand contact to ATP; it reads GPPGTGKT. Histidine 459 contributes to the Zn(2+) binding site. The active site involves glutamate 460. 2 residues coordinate Zn(2+): histidine 463 and aspartate 535.

In the central section; belongs to the AAA ATPase family. The protein in the C-terminal section; belongs to the peptidase M41 family. Homohexamer. The cofactor is Zn(2+).

Its subcellular location is the cell membrane. Functionally, acts as a processive, ATP-dependent zinc metallopeptidase for both cytoplasmic and membrane proteins. Plays a role in the quality control of integral membrane proteins. In Thermobaculum terrenum (strain ATCC BAA-798 / CCMEE 7001 / YNP1), this protein is ATP-dependent zinc metalloprotease FtsH.